The chain runs to 142 residues: Large ribosomal subunit protein uL11 (142 aa).

Belongs to the universal ribosomal protein uL11 family. In terms of assembly, part of the ribosomal stalk of the 50S ribosomal subunit. Interacts with L10 and the large rRNA to form the base of the stalk. L10 forms an elongated spine to which L12 dimers bind in a sequential fashion forming a multimeric L10(L12)X complex. Post-translationally, one or more lysine residues are methylated.

Forms part of the ribosomal stalk which helps the ribosome interact with GTP-bound translation factors. The protein is Large ribosomal subunit protein uL11 of Yersinia pseudotuberculosis serotype O:1b (strain IP 31758).